Consider the following 398-residue polypeptide: MNVLVINCGSSSLKYQLIDMDTENALATGLVERIGLEGANLTQKSEGKDKYEIVEPMKDHQDAIRLVLGALIDEKHGVIKSLDEINAIGHRVVHGGEKYAESALVTEEVMKDLEECAKLAPLHNPANIIGINACKALMPNVPMVVVFDTAFHQTMPEKAFVYALPYELYEKEHIRKYGFHGTSHKYVSAKIAEAMGKNIEDLKIITCHLGNGASIAAIKNGKCVDTTMGFTPLEGLVMGTRCGNIDPAVVTYLIDELGYTSQEVNTLMNKKSGIFGVSGVSSDFRDVEAAADKGSKEAQIALDLFRNSVKKYIGAYIAEMNGCDVIVFTAGVGENSIIERGAICRDLEFLGIELDEERNNIRAKVAEISKEGSRIKLFVVPTNEELMIAQDTVSIVSK.

Asparagine 7 contributes to the Mg(2+) binding site. Lysine 14 provides a ligand contact to ATP. Arginine 91 contributes to the substrate binding site. Aspartate 148 (proton donor/acceptor) is an active-site residue. Residues 208-212, 283-285, and 331-335 each bind ATP; these read HLGNG, DFR, and GVGEN. Residue glutamate 384 participates in Mg(2+) binding.

This sequence belongs to the acetokinase family. As to quaternary structure, homodimer. Requires Mg(2+) as cofactor. It depends on Mn(2+) as a cofactor.

Its subcellular location is the cytoplasm. The catalysed reaction is acetate + ATP = acetyl phosphate + ADP. The protein operates within metabolic intermediate biosynthesis; acetyl-CoA biosynthesis; acetyl-CoA from acetate: step 1/2. Catalyzes the formation of acetyl phosphate from acetate and ATP. Can also catalyze the reverse reaction. This chain is Acetate kinase 2, found in Clostridium perfringens (strain 13 / Type A).